Reading from the N-terminus, the 309-residue chain is Methionyl-tRNA formyltransferase (309 aa).

109–112 (SLLP) is a (6S)-5,6,7,8-tetrahydrofolate binding site.

It belongs to the Fmt family.

It carries out the reaction L-methionyl-tRNA(fMet) + (6R)-10-formyltetrahydrofolate = N-formyl-L-methionyl-tRNA(fMet) + (6S)-5,6,7,8-tetrahydrofolate + H(+). Functionally, attaches a formyl group to the free amino group of methionyl-tRNA(fMet). The formyl group appears to play a dual role in the initiator identity of N-formylmethionyl-tRNA by promoting its recognition by IF2 and preventing the misappropriation of this tRNA by the elongation apparatus. This Clostridium perfringens (strain 13 / Type A) protein is Methionyl-tRNA formyltransferase.